The primary structure comprises 132 residues: Snaclec bothroinsularin subunit alpha (132 aa).

Intrachain disulfides connect cysteine 2/cysteine 13, cysteine 30/cysteine 127, and cysteine 102/cysteine 119. The region spanning 9 to 128 (YGQYCYKFFQ…CGQQNPFVCK (120 aa)) is the C-type lectin domain.

The protein belongs to the snaclec family. In terms of assembly, heterodimer of subunits alpha and beta; disulfide-linked. In terms of tissue distribution, expressed by the venom gland.

The protein localises to the secreted. Functionally, thrombin and prothrombin (F2) inhibitor. The IC(50) of thrombin-induced platelet aggregation and fibrinocoagulation is 62 and 35 nM, respectively. Its inhibitory activity is at least 10-fold lower than that observed for other thrombin inhibitors. The protein is Snaclec bothroinsularin subunit alpha of Bothrops insularis (Golden lancehead).